A 63-amino-acid chain; its full sequence is Cecropin-B (63 aa).

A signal peptide spans 1–22 (MNFNKIFVFVALILAISLGNTE). Residue Arg62 is modified to Arginine amide.

This sequence belongs to the cecropin family.

The protein localises to the secreted. Functionally, cecropins have lytic and antibacterial activity against several Gram-positive and Gram-negative bacteria. The protein is Cecropin-B (CecB) of Drosophila simulans (Fruit fly).